The sequence spans 84 residues: Toxin To10 (84 aa).

The N-terminal stretch at 1-19 is a signal peptide; the sequence is MNYSTLIAVASLLTAGTES. The 60-residue stretch at 21 to 80 folds into the LCN-type CS-alpha/beta domain; sequence KDGYPVEGSCAFPCGYDNAYCDKLCKERKADSGYCYWVNILCYCYGLPDNAAIKGYGRCK. Cystine bridges form between Cys30-Cys79, Cys34-Cys55, Cys41-Cys62, and Cys45-Cys64. Pro81 carries the proline amide modification.

The protein belongs to the long (4 C-C) scorpion toxin superfamily. Sodium channel inhibitor family. Alpha subfamily. In terms of tissue distribution, expressed by the venom gland.

It is found in the secreted. Its function is as follows. Alpha toxins bind voltage-independently at site-3 of sodium channels (Nav) and inhibit the inactivation of the activated channels, thereby blocking neuronal transmission. The chain is Toxin To10 from Tityus obscurus (Amazonian scorpion).